The sequence spans 215 residues: Uridine kinase (215 aa).

16 to 23 lines the ATP pocket; that stretch reads GASASGKS.

The protein belongs to the uridine kinase family.

The protein localises to the cytoplasm. The catalysed reaction is uridine + ATP = UMP + ADP + H(+). It catalyses the reaction cytidine + ATP = CMP + ADP + H(+). It functions in the pathway pyrimidine metabolism; CTP biosynthesis via salvage pathway; CTP from cytidine: step 1/3. The protein operates within pyrimidine metabolism; UMP biosynthesis via salvage pathway; UMP from uridine: step 1/1. This chain is Uridine kinase, found in Aliivibrio fischeri (strain ATCC 700601 / ES114) (Vibrio fischeri).